Consider the following 147-residue polypeptide: UPF0178 protein IL2341 (147 aa).

This sequence belongs to the UPF0178 family.

The sequence is that of UPF0178 protein IL2341 from Idiomarina loihiensis (strain ATCC BAA-735 / DSM 15497 / L2-TR).